Consider the following 482-residue polypeptide: Programmed cell death protein 7 (482 aa).

Disordered stretches follow at residues 1 to 136 (MALP…GDAA) and 151 to 170 (GNPR…GPSL). The span at 13-48 (GPPPPQPPPSAPFGCPPPPLPSPAFPPPLPQRPGPF) shows a compositional bias: pro residues. A compositionally biased stretch (low complexity) spans 49 to 71 (PGASAPFLQPPLALQPRAPAEAS). Pro residues-rich tracts occupy residues 82–100 (PVPP…PFPG) and 109–130 (PPPP…PPPD). A compositionally biased stretch (low complexity) spans 151 to 168 (GNPRRPGGLRTPRTPAGP). The stretch at 233 to 408 (EARRRLERVR…LQKREIESKL (176 aa)) forms a coiled coil.

Interacts with RBM40. Component of the U11/U12 snRNPs that are part of the U12-type spliceosome. Highly expressed in testis, thymus and lymph nodes. Detected at low levels in embryonic stem cells.

It localises to the nucleus. Functionally, promotes apoptosis when overexpressed. This Mus musculus (Mouse) protein is Programmed cell death protein 7 (Pdcd7).